We begin with the raw amino-acid sequence, 283 residues long: Probable endonuclease 4 (283 aa).

The Zn(2+) site is built by histidine 67, histidine 107, glutamate 144, aspartate 178, histidine 181, histidine 215, aspartate 228, histidine 230, and glutamate 260.

It belongs to the AP endonuclease 2 family. Zn(2+) serves as cofactor.

It carries out the reaction Endonucleolytic cleavage to 5'-phosphooligonucleotide end-products.. Its function is as follows. Endonuclease IV plays a role in DNA repair. It cleaves phosphodiester bonds at apurinic or apyrimidinic (AP) sites, generating a 3'-hydroxyl group and a 5'-terminal sugar phosphate. In Geobacter sp. (strain M21), this protein is Probable endonuclease 4.